The chain runs to 260 residues: Thrombin-like enzyme 1 (260 aa).

The first 18 residues, 1-18 (MVLITVLANLLILQLSYA), serve as a signal peptide directing secretion. Positions 19-24 (QKSSEL) are excised as a propeptide. A Peptidase S1 domain is found at 25–251 (VIGGDECNIN…HLDWIQSIIA (227 aa)). Cystine bridges form between cysteine 31-cysteine 165, cysteine 52-cysteine 68, cysteine 102-cysteine 258, cysteine 144-cysteine 212, cysteine 176-cysteine 191, and cysteine 202-cysteine 227. Histidine 67 serves as the catalytic Charge relay system. Asparagine 105 carries an N-linked (GlcNAc...) asparagine glycan. The Charge relay system role is filled by aspartate 112. N-linked (GlcNAc...) asparagine glycosylation is found at asparagine 156 and asparagine 172. The active-site Charge relay system is serine 206. An N-linked (GlcNAc...) asparagine glycan is attached at asparagine 253.

It belongs to the peptidase S1 family. Snake venom subfamily. Monomer. Expressed by the venom gland.

Its subcellular location is the secreted. Thrombin-like snake venom serine protease. This Trimeresurus albolabris (White-lipped pit viper) protein is Thrombin-like enzyme 1.